Reading from the N-terminus, the 106-residue chain is Pyruvate decarboxylase 2 (106 aa).

Asn10 and Gly12 together coordinate Mg(2+).

Belongs to the TPP enzyme family. As to quaternary structure, homotetramer. A metal cation is required as a cofactor. The cofactor is thiamine diphosphate.

The enzyme catalyses a 2-oxocarboxylate + H(+) = an aldehyde + CO2. This is Pyruvate decarboxylase 2 (PDC2) from Zea mays (Maize).